A 116-amino-acid polypeptide reads, in one-letter code: Large ribosomal subunit protein uL24c (116 aa).

The protein belongs to the universal ribosomal protein uL24 family. Part of the 50S ribosomal subunit.

It is found in the plastid. Its subcellular location is the chloroplast. Functionally, one of two assembly initiator proteins, it binds directly to the 5'-end of the 23S rRNA, where it nucleates assembly of the 50S subunit. This Pyropia yezoensis (Susabi-nori) protein is Large ribosomal subunit protein uL24c (rpl24).